The sequence spans 843 residues: Protein piwi (843 aa).

The Nuclear localization signal motif lies at 1 to 12 (MADDQGRGRRRP). Residues 1–76 (MADDQGRGRR…TERKPWGDQY (76 aa)) form a disordered region. The segment at 1-257 (MADDQGRGRR…ILLGTEITHK (257 aa)) is interaction with CBX5 and papi. A symmetric dimethylarginine mark is found at arginine 7, arginine 9, arginine 10, and arginine 11. The span at 41 to 72 (PRADPRIEASRERRALEEAPRREGGPTERKPW) shows a compositional bias: basic and acidic residues. A PAZ domain is found at 263–372 (TIYDIMRRCS…LIPELCRVTG (110 aa)). In terms of domain architecture, Piwi spans 538-829 (LILCLVPNDN…LATLVGTNLH (292 aa)). Position 589 (glutamine 589) interacts with Mg(2+). Residues aspartate 614 and aspartate 685 contribute to the active site. Mg(2+) is bound at residue leucine 843.

The protein belongs to the argonaute family. Piwi subfamily. In terms of assembly, in the ovaries, part of a complex composed of at least Panx, nxf2, piwi and Nxt1. The complex is knowns as Panx-induced co-transcriptional silencing (PICTS) complex, Panx-nxf2-dependent TAP/p15 silencing (Pandas complex), SFiNX (silencing factor interacting nuclear export variant) or piwi-Panx-nxf2-p15 (PPNP) complex. Interacts with vas; this interaction is RNA-independent. Interacts with Dcr-1 and Fmr1; these interactions occur in polar granules. Interacts (via N-terminal region) with CBX5 (via chromoshadow domain). Forms a complex with Hsp83 and Hop; probably Hop mediates the interaction between piwi and Hsp83. Forms a complex with Yb body components armi and fs(1)Yb; this interaction is required for proper piRNA loading and nuclear localization of piwi. Interaction of Piwi and fs(1)Yb is likely to occur via armi. Interacts (via the N-terminal region when unmethylated or symmetrically methylated at Arg-10) with papi (via Tudor domain). Interacts with vret. Interacts with Panx. Interacts with arx. Interacts with Tudor-SN. Interacts with Nup358 (via N-terminus). Associates with the nuclear pore complex via interaction with Elys. Interacts with thoc5; the interaction might be partly RNA-mediated. Interacts with xmas-2. In terms of processing, symmetrically dimethylated, most likely by csul. Methylation at Arg-10 enhances binding to papi whereas methylation at Arg-7, Arg-9 or Arg-11 reduces binding affinity to papi. Post-translationally, phosphorylated on serine and tyrosine residues in an Hsp83-dependent manner. In terms of tissue distribution, expressed in ovaries (at protein level). Expressed somatically in ovariole terminal filament cells, epithelial sheath cells, cap cells and follicle cells (at protein level). Expressed in nurse cells and oocytes in developing egg chambers (at protein level). In embryos, accumulates in pole cells (at protein level). In larval and adult testis, expressed in a germinal proliferative center at the apical tip containing somatic hub cells and mitotically dividing germ stem cells (at protein level).

The protein resides in the cytoplasm. It is found in the nucleus. The protein localises to the nucleoplasm. Its subcellular location is the chromosome. Functionally, acts via the piwi-interacting RNA (piRNA) metabolic process, which mediates the repression of transposable elements during meiosis by forming complexes composed of piRNAs and Piwi proteins and governs the methylation and subsequent repression of transposons. Directly binds piRNAs, a class of 24 to 30 nucleotide RNAs that are generated by a Dicer-independent mechanism and are primarily derived from transposons and other repeated sequence elements. In ovarian somatic cells, mediates silencing of transposable elements at the transcriptional level in a mael-dependent manner. Involved in silencing of long terminal repeat (LTR) retrotransposons in male germline. In testis, regulates spermatogenesis together with Tudor-SN. In germ cells, mediates silencing at both transcriptional and post-transcriptional levels and is involved in the maintenance of populations of primary and secondary piRNAs. Piwi-mediated transcriptional silencing is accompanied by the formation of His3 trimethylated on 'Lys-10' (H3K9me3) associated euchromatin and heterochromatin. In ovary, associates predominantly with antisense piRNAs that contain uridine at their 5' end. Association with sense piRNAs is also observed but to a lesser extent. Mediates a somatic signaling mechanism required for the maintenance of germline stem cells to produce and maintain a daughter germline stem cell. It is not essential for the further differentiation of the committed daughter cell. Acts cell autonomously to promote germline stem cell division. Its role in stem cell maintenance does not seem to require nuclear localization. Required maternally for the posterior localization of osk and vas and for pole cell formation during oogenesis and early embryogenesis. Together with Hop and Hsp83, mediates canalization, also known as developmental robustness, likely via epigenetic silencing of existing genetic variants and suppression of transposon-induced new genetic variation. Shows RNA cleavage activity, although is not required for any of its known functions. In the ovaries, forms a complex with nxf2, Panx and Nxt1 which acts as effectors of cotranscriptional transposon silencing. This Drosophila melanogaster (Fruit fly) protein is Protein piwi.